We begin with the raw amino-acid sequence, 612 residues long: Transcription factor Sp2 (612 aa).

At Ser78 the chain carries Phosphoserine. Disordered stretches follow at residues 166–195 and 226–250; these read TTPSTSGHKPVPIKPAPVQKSSTTTTPVQS and GPAQLLTESPPTPLSKTNKKARKKS. A compositionally biased stretch (polar residues) spans 184 to 195; it reads QKSSTTTTPVQS. The 9aaTAD; inactive motif lies at 360–368; the sequence is GEVQTVLVQ. 3 C2H2-type zinc fingers span residues 524 to 548, 554 to 578, and 584 to 606; these read HVCHIPDCGKTFRKTSLLRAHVRLH, FVCNWFFCGKRFTRSDELQRHARTH, and FECAQCQKRFMRSDHLTKHYKTH.

This sequence belongs to the Sp1 C2H2-type zinc-finger protein family.

It is found in the nucleus. Its function is as follows. Binds to GC box promoters elements and selectively activates mRNA synthesis from genes that contain functional recognition sites. The protein is Transcription factor Sp2 (Sp2) of Mus musculus (Mouse).